Reading from the N-terminus, the 88-residue chain is Carboxysome shell vertex protein CsoS4A (88 aa).

Positions 1 to 76 (MLICKVLKPL…SDLTIVGIID (76 aa)) constitute a BMV domain.

Belongs to the CcmL/EutN family. CsoS4 subfamily. Homopentamer.

The protein localises to the carboxysome. Its function is as follows. Probably forms vertices in the carboxysome, a polyhedral inclusion where RuBisCO (ribulose bisphosphate carboxylase, cbbL-cbbS) is sequestered. Has been modeled to induce curvature upon insertion into an otherwise flat hexagonal layer of major carboxysome subunits. Has not been identified in purified carboxysomes; it is expected to be present in very low amounts. In Prochlorococcus marinus subsp. pastoris (strain CCMP1986 / NIES-2087 / MED4), this protein is Carboxysome shell vertex protein CsoS4A.